A 1212-amino-acid polypeptide reads, in one-letter code: Myosin-1 (1212 aa).

A disordered region spans residues 1–35; that stretch reads MGITRRGKDKAAAGQAVAGGASGGRARPKKATFET. Positions 41-715 constitute a Myosin motor domain; the sequence is VGVSDLTLLS…TLFALEHMRD (675 aa). 134–141 contributes to the ATP binding site; it reads GESGAGKT. The actin-binding stretch occupies residues 405–487; it reads SVGILDIYGF…PGVFSALKDA (83 aa). 2 IQ domains span residues 719–739 and 740–765; these read HNMA…RAES and ATRI…HGHR. The 190-residue stretch at 773–962 folds into the TH1 domain; sequence RRRMSILGSR…AVHTQQGEPP (190 aa). Disordered stretches follow at residues 947–1064 and 1115–1212; these read DFYK…APPA and PAAY…DDDW. A compositionally biased stretch (polar residues) spans 954–966; the sequence is VHTQQGEPPNSVS. 2 stretches are compositionally biased toward low complexity: residues 987–998 and 1008–1052; these read RPGGPNGRPARG and PGGA…ASVR. The segment covering 1053 to 1062 has biased composition (pro residues); it reads APPPPPPAAP. The region spanning 1065 to 1124 is the SH3 domain; sequence KAKIMAKVLYDFAGQKENEMSIKEGDLIEIVQKENNGWWLAKSGNQQAWVPAAYVEEQKQ. The segment covering 1125-1140 has biased composition (pro residues); it reads APPPVAASRPPPPAPP. Positions 1171–1190 are enriched in polar residues; the sequence is MSLNGSDGSRSNTPTPSLGN.

It belongs to the TRAFAC class myosin-kinesin ATPase superfamily. Myosin family.

Its subcellular location is the cytoplasm. It localises to the cytoskeleton. The protein resides in the actin patch. Type-I myosin implicated in the organization of the actin cytoskeleton. Required for proper actin cytoskeleton polarization. At the cell cortex, assembles in patch-like structures together with proteins from the actin-polymerizing machinery and promotes actin assembly. Functions as actin nucleation-promoting factor (NPF) for the Arp2/3 complex. In Pyricularia oryzae (strain 70-15 / ATCC MYA-4617 / FGSC 8958) (Rice blast fungus), this protein is Myosin-1 (MYO1).